The primary structure comprises 282 residues: Pantothenate synthetase (282 aa).

30–37 (MGALHRGH) contacts ATP. Residue His37 is the Proton donor of the active site. A (R)-pantoate-binding site is contributed by Gln61. Beta-alanine is bound at residue Gln61. 147 to 150 (GEKD) lines the ATP pocket. Gln153 is a binding site for (R)-pantoate. 184–187 (LSSR) is a binding site for ATP.

This sequence belongs to the pantothenate synthetase family. In terms of assembly, homodimer.

The protein resides in the cytoplasm. It carries out the reaction (R)-pantoate + beta-alanine + ATP = (R)-pantothenate + AMP + diphosphate + H(+). Its pathway is cofactor biosynthesis; (R)-pantothenate biosynthesis; (R)-pantothenate from (R)-pantoate and beta-alanine: step 1/1. Its function is as follows. Catalyzes the condensation of pantoate with beta-alanine in an ATP-dependent reaction via a pantoyl-adenylate intermediate. In Rhizorhabdus wittichii (strain DSM 6014 / CCUG 31198 / JCM 15750 / NBRC 105917 / EY 4224 / RW1) (Sphingomonas wittichii), this protein is Pantothenate synthetase.